Here is a 439-residue protein sequence, read N- to C-terminus: Mitochondrial distribution and morphology protein 12 (439 aa).

The SMP-LTD domain maps to 1–439 (MSIDINWEAA…VYPSFWTFLV (439 aa)). Acidic residues predominate over residues 71–84 (EEDEGDEDFSDDQD). Disordered stretches follow at residues 71-104 (EEDE…GTWQ), 182-278 (TPLA…HEKK), and 362-385 (YIPG…RRDD). Residues 212 to 229 (DYPRPVHRQTDTDIDSGH) show a composition bias toward basic and acidic residues. A compositionally biased stretch (polar residues) spans 230–255 (SRPSTADTLNSINSQRISNPALSHPH). Basic and acidic residues predominate over residues 256 to 269 (SSNESHPDTRDHSP).

Belongs to the MDM12 family. Component of the ER-mitochondria encounter structure (ERMES) or MDM complex, composed of MMM1, MDM10, MDM12 and MDM34. An MMM1 homodimer associates with one molecule of MDM12 on each side in a pairwise head-to-tail manner, and the SMP-LTD domains of MMM1 and MDM12 generate a continuous hydrophobic tunnel for phospholipid trafficking.

It is found in the mitochondrion outer membrane. The protein localises to the endoplasmic reticulum membrane. Component of the ERMES/MDM complex, which serves as a molecular tether to connect the endoplasmic reticulum (ER) and mitochondria. Components of this complex are involved in the control of mitochondrial shape and protein biogenesis, and function in nonvesicular lipid trafficking between the ER and mitochondria. MDM12 is required for the interaction of the ER-resident membrane protein MMM1 and the outer mitochondrial membrane-resident beta-barrel protein MDM10. The MDM12-MMM1 subcomplex functions in the major beta-barrel assembly pathway that is responsible for biogenesis of all mitochondrial outer membrane beta-barrel proteins, and acts in a late step after the SAM complex. The MDM10-MDM12-MMM1 subcomplex further acts in the TOM40-specific pathway after the action of the MDM12-MMM1 complex. Essential for establishing and maintaining the structure of mitochondria and maintenance of mtDNA nucleoids. In Uncinocarpus reesii (strain UAMH 1704), this protein is Mitochondrial distribution and morphology protein 12.